Here is an 88-residue protein sequence, read N- to C-terminus: Small ribosomal subunit protein bS16 (88 aa).

It belongs to the bacterial ribosomal protein bS16 family.

In Desulfitobacterium hafniense (strain DSM 10664 / DCB-2), this protein is Small ribosomal subunit protein bS16.